Here is a 273-residue protein sequence, read N- to C-terminus: Type IV secretion system protein PtlF (273 aa).

The first 20 residues, 1 to 20 (MMAARMMAAGLAATALSAHA), serve as a signal peptide directing secretion.

Belongs to the TrbG/VirB9 family. In terms of assembly, forms a complex with PtlI.

It is found in the cell outer membrane. Component of the type IV secretion system ptl required for secretion of assembled pertussis toxin (PTX) through the outer membrane. The sequence is that of Type IV secretion system protein PtlF (ptlF) from Bordetella pertussis (strain Tohama I / ATCC BAA-589 / NCTC 13251).